A 265-amino-acid polypeptide reads, in one-letter code: Mlc titration factor A (265 aa).

Zn(2+) is bound by residues H111, H148, H152, and E211.

This sequence belongs to the MtfA family. As to quaternary structure, interacts with Mlc. It depends on Zn(2+) as a cofactor.

It is found in the cytoplasm. Functionally, involved in the modulation of the activity of the glucose-phosphotransferase system (glucose-PTS). Interacts with the transcriptional repressor Mlc, preventing its interaction with DNA and leading to the modulation of expression of genes regulated by Mlc, including ptsG, which encodes the PTS system glucose-specific EIICB component. Its function is as follows. Shows zinc-dependent metallopeptidase activity. This chain is Mlc titration factor A, found in Shigella sonnei (strain Ss046).